A 2145-amino-acid polypeptide reads, in one-letter code: Adenylate cyclase (2145 aa).

Disordered stretches follow at residues 1–115 (MPRN…RMSD), 127–236 (DPAG…SGAR), 266–307 (GKEH…PVPK), and 329–547 (VRDI…GPTD). 3 stretches are compositionally biased toward low complexity: residues 7-23 (SSRFSSMTGSSTDSARS), 35-68 (PSASSSSPFAASSNQTSNASRSASHGSRRAAPSR), and 89-107 (SPTSTSPCVSPSSITSSNS). Polar residues-rich tracts occupy residues 134-148 (SRTQQNNPSSGSLSQ) and 159-205 (PASS…TESP). The span at 217–234 (SIASITTTASSQGSRASG) shows a compositional bias: low complexity. The span at 269 to 281 (HRSHSYSHARPHR) shows a compositional bias: basic residues. Positions 343 to 357 (NDSSQQNNPPKTSGS) are enriched in polar residues. Over residues 377–403 (KSNEDPRSLRPTVSREDSTISVPKDRN) the composition is skewed to basic and acidic residues. Polar residues predominate over residues 404–441 (GSSTMYGTRSRAQSPAPSTTGSYWGHKSGSTDGQTSPG). 2 stretches are compositionally biased toward basic and acidic residues: residues 454–466 (RLKEKDDAPDLKK) and 495–511 (ADGKYQPDVRDGIRPDL). The Ras-associating domain maps to 637–727 (HNYCIRVFRA…IEDIGREDNS (91 aa)). LRR repeat units lie at residues 779 to 800 (EIISLNLSRNLSLQVPRDFISV), 803 to 824 (NLRDIKFNNNEARALPKSFGYA), 826 to 847 (RLTMLDASNNRLESLESAALHN), 850 to 871 (GLLKLNLANNKLKQLPREFEAF), 873 to 894 (VLRTLNISSNLLNNFPPFLAKL), 896 to 917 (NLVDLDLSFNTIQSLPDNVGQM), 919 to 941 (SLERLVITNNELSGSLPPSFKNL), 943 to 964 (SLRELDIKYNAISNIDVISQLP), 965 to 986 (KLEILSATRNNISQFSGTFERV), 987 to 1006 (RSIKLNWNPITKFEIKAPVP), 1007 to 1028 (TLKALNLSNAQLASIDESFHNM), 1030 to 1051 (NLERLELDKNYFVSLPAHIGNL), 1053 to 1074 (RLEYFSIAHNSVGELPPEIGCL), 1076 to 1097 (ELKRLDVRGNNIRKLPMELWWA), and 1099 to 1120 (KLDYLNASSNVLENFPKPASRA). The tract at residues 1114-1226 (PKPASRAPHP…SSRKDSSHTQ (113 aa)) is disordered. Low complexity-rich tracts occupy residues 1160–1179 (RPSQASSSLLSVGPSPVPGG) and 1201–1217 (SRSTTQSSTALATPTAS). LRR repeat units follow at residues 1235–1255 (SLRYLYMADNQLDDDCFDQLC), 1259–1280 (NLRVLNLSYNDLSDMPQRSIKS), 1283–1304 (QLVELYLSGNELASLPADDLEE), 1307–1328 (MLQTLHINGNKFTNLPADISRA), 1330–1352 (KLTVFDCGSNSLKYNIANVPYDW), and 1359–1380 (NLRYLNLSGNRRLEIKQSSVPT). Positions 1432–1709 (PYGMADTLGS…NKMTVQMLGV (278 aa)) constitute a PPM-type phosphatase domain. Residues 1718-1760 (RSRQHKGQSMPVYASLQDDGGSSTGMRRARKARDGPLDSTLGR) are disordered. The region spanning 1773 to 1910 (AIVFTDIKNS…PMVNKASRIS (138 aa)) is the Guanylate cyclase domain. Residues Asp-1778 and Asp-1821 each coordinate Mg(2+).

It belongs to the adenylyl cyclase class-3 family. The cofactor is Mg(2+).

The enzyme catalyses ATP = 3',5'-cyclic AMP + diphosphate. Functionally, plays essential roles in regulation of cellular metabolism by catalyzing the synthesis of a second messenger, cAMP. The polypeptide is Adenylate cyclase (Podospora anserina (Pleurage anserina)).